A 496-amino-acid polypeptide reads, in one-letter code: Probable cytosol aminopeptidase (496 aa).

The Mn(2+) site is built by K258 and D263. K270 is an active-site residue. Positions 281, 340, and 342 each coordinate Mn(2+). Residue R344 is part of the active site.

Belongs to the peptidase M17 family. Mn(2+) serves as cofactor.

The protein resides in the cytoplasm. It catalyses the reaction Release of an N-terminal amino acid, Xaa-|-Yaa-, in which Xaa is preferably Leu, but may be other amino acids including Pro although not Arg or Lys, and Yaa may be Pro. Amino acid amides and methyl esters are also readily hydrolyzed, but rates on arylamides are exceedingly low.. It carries out the reaction Release of an N-terminal amino acid, preferentially leucine, but not glutamic or aspartic acids.. Functionally, presumably involved in the processing and regular turnover of intracellular proteins. Catalyzes the removal of unsubstituted N-terminal amino acids from various peptides. The polypeptide is Probable cytosol aminopeptidase (Helicobacter pylori (strain P12)).